The following is a 142-amino-acid chain: Large ribosomal subunit protein uL13 (142 aa).

The protein belongs to the universal ribosomal protein uL13 family. As to quaternary structure, part of the 50S ribosomal subunit.

In terms of biological role, this protein is one of the early assembly proteins of the 50S ribosomal subunit, although it is not seen to bind rRNA by itself. It is important during the early stages of 50S assembly. The chain is Large ribosomal subunit protein uL13 from Cupriavidus necator (strain ATCC 17699 / DSM 428 / KCTC 22496 / NCIMB 10442 / H16 / Stanier 337) (Ralstonia eutropha).